Consider the following 305-residue polypeptide: MAFLVERCGGEMVVSMERSHGRSTTTAAAVTAAPAPFLSKTYQLVDDPSTDDVVSWGEDEATFVVWRPPEFARDLLPNYFKHNNFSSFVRQLNTYGFRKIVADRWEFANEFFRKGAKHLLSEIHRRKSSSCSQPQPPPPFPMHQHYPLSLFSPPTTPRSPPVGAAAAAAYHFQEEYCSSPADYAGGGGDLLAALSEDNRQLRRRNSLLLSELAHMRKLYNDIIYFLQNHVEPVAPPPLAAATSCRLVELGPSTTERRRCAASPSGDNDDDAAVRLFGVRLDDDHGKKRRVQLVQEDEGDEQGSEG.

Residues 201-230 (LRRRNSLLLSELAHMRKLYNDIIYFLQNHV) form a hydrophobic repeat HR-A/B region. A Nuclear localization signal motif is present at residues 286-289 (KKRR). The tract at residues 286–305 (KKRRVQLVQEDEGDEQGSEG) is disordered. Positions 294–305 (QEDEGDEQGSEG) are enriched in acidic residues.

This sequence belongs to the HSF family. Class B subfamily. In terms of assembly, homotrimer. Exhibits temperature-dependent phosphorylation.

It localises to the nucleus. Its function is as follows. Transcriptional regulator that specifically binds DNA of heat shock promoter elements (HSE). The protein is Heat stress transcription factor B-4d (HSFB4D) of Oryza sativa subsp. japonica (Rice).